The following is a 1078-amino-acid chain: Carbamoyl phosphate synthase large chain (1078 aa).

Positions 1–401 (MARQPLVSSV…ALQKAVRGLE (401 aa)) are carboxyphosphate synthetic domain. ATP is bound by residues Arg-129, Arg-169, Gly-175, Gly-176, Arg-208, Leu-210, Glu-215, Gly-241, Val-242, His-243, Gln-284, and Glu-298. Positions 133-327 (KELLLEIGEP…IARIAAKLAI (195 aa)) constitute an ATP-grasp 1 domain. The Mg(2+) site is built by Gln-284, Glu-298, and Asn-300. Residues Gln-284, Glu-298, and Asn-300 each contribute to the Mn(2+) site. The tract at residues 402 to 546 (TDQTDLTWED…YATYEDENEA (145 aa)) is oligomerization domain. Positions 547–935 (PPLDSPKAVV…ALAKAFLAAG (389 aa)) are carbamoyl phosphate synthetic domain. Residues 677 to 867 (ERFLHELGIP…MVDVATQILL (191 aa)) form the ATP-grasp 2 domain. Arg-713, Lys-752, Leu-754, Glu-758, Gly-783, Val-784, His-785, Ser-786, Gln-826, and Glu-838 together coordinate ATP. Mg(2+) contacts are provided by Gln-826, Glu-838, and Asn-840. The Mn(2+) site is built by Gln-826, Glu-838, and Asn-840. The region spanning 936–1078 (LAIERGAPVL…AYRTREAVLA (143 aa)) is the MGS-like domain. Residues 936 to 1078 (LAIERGAPVL…AYRTREAVLA (143 aa)) form an allosteric domain region.

It belongs to the CarB family. In terms of assembly, composed of two chains; the small (or glutamine) chain promotes the hydrolysis of glutamine to ammonia, which is used by the large (or ammonia) chain to synthesize carbamoyl phosphate. Tetramer of heterodimers (alpha,beta)4. Mg(2+) is required as a cofactor. Mn(2+) serves as cofactor.

The catalysed reaction is hydrogencarbonate + L-glutamine + 2 ATP + H2O = carbamoyl phosphate + L-glutamate + 2 ADP + phosphate + 2 H(+). The enzyme catalyses hydrogencarbonate + NH4(+) + 2 ATP = carbamoyl phosphate + 2 ADP + phosphate + 2 H(+). It functions in the pathway amino-acid biosynthesis; L-arginine biosynthesis; carbamoyl phosphate from bicarbonate: step 1/1. Its pathway is pyrimidine metabolism; UMP biosynthesis via de novo pathway; (S)-dihydroorotate from bicarbonate: step 1/3. In terms of biological role, large subunit of the glutamine-dependent carbamoyl phosphate synthetase (CPSase). CPSase catalyzes the formation of carbamoyl phosphate from the ammonia moiety of glutamine, carbonate, and phosphate donated by ATP, constituting the first step of 2 biosynthetic pathways, one leading to arginine and/or urea and the other to pyrimidine nucleotides. The large subunit (synthetase) binds the substrates ammonia (free or transferred from glutamine from the small subunit), hydrogencarbonate and ATP and carries out an ATP-coupled ligase reaction, activating hydrogencarbonate by forming carboxy phosphate which reacts with ammonia to form carbamoyl phosphate. This Thermomicrobium roseum (strain ATCC 27502 / DSM 5159 / P-2) protein is Carbamoyl phosphate synthase large chain.